Reading from the N-terminus, the 320-residue chain is Lipoyl synthase (320 aa).

Positions 1-27 (MRVEIDHRNSGGGKLRHPEKQHRPDNP) are disordered. Over residues 16-25 (RHPEKQHRPD) the composition is skewed to basic and acidic residues. The [4Fe-4S] cluster site is built by cysteine 61, cysteine 66, cysteine 72, cysteine 87, cysteine 91, cysteine 94, and serine 300. In terms of domain architecture, Radical SAM core spans 73 to 289 (WSQRHATMMI…AAMARAKGFL (217 aa)).

Belongs to the radical SAM superfamily. Lipoyl synthase family. It depends on [4Fe-4S] cluster as a cofactor.

The protein localises to the cytoplasm. The enzyme catalyses [[Fe-S] cluster scaffold protein carrying a second [4Fe-4S](2+) cluster] + N(6)-octanoyl-L-lysyl-[protein] + 2 oxidized [2Fe-2S]-[ferredoxin] + 2 S-adenosyl-L-methionine + 4 H(+) = [[Fe-S] cluster scaffold protein] + N(6)-[(R)-dihydrolipoyl]-L-lysyl-[protein] + 4 Fe(3+) + 2 hydrogen sulfide + 2 5'-deoxyadenosine + 2 L-methionine + 2 reduced [2Fe-2S]-[ferredoxin]. The protein operates within protein modification; protein lipoylation via endogenous pathway; protein N(6)-(lipoyl)lysine from octanoyl-[acyl-carrier-protein]: step 2/2. Its function is as follows. Catalyzes the radical-mediated insertion of two sulfur atoms into the C-6 and C-8 positions of the octanoyl moiety bound to the lipoyl domains of lipoate-dependent enzymes, thereby converting the octanoylated domains into lipoylated derivatives. The chain is Lipoyl synthase from Acidiphilium cryptum (strain JF-5).